A 207-amino-acid chain; its full sequence is Protein phosphatase inhibitor 2 (207 aa).

Disordered stretches follow at residues 1-44 (MAAS…SKKS), 65-97 (LMKI…ALTP), and 110-146 (ESLE…EMKR). An N-acetylalanine modification is found at A2. The interval 12–17 (KGILKN) is required for binding PPP1CC. A compositionally biased stretch (low complexity) spans 19 to 28 (SSTTSSVVST). A compositionally biased stretch (basic and acidic residues) spans 35 to 44 (SVDEELSKKS). Positions 43-55 (KSQKWDEMSILAT) are required for binding PPP1CC. A Phosphoserine; by ATM modification is found at S44. T73 carries the phosphothreonine; by GSK3 modification. Acidic residues predominate over residues 80–91 (ADDEDALSDSET). Phosphoserine is present on residues S87 and S89. 2 positions are modified to phosphothreonine: T92 and T96. A compositionally biased stretch (basic and acidic residues) spans 112 to 122 (LEPKYRVREQE). Phosphoserine occurs at positions 123, 124, 129, and 132. The segment covering 123-132 (SSGDEDSDLS) has biased composition (acidic residues). Over residues 133–145 (PEEREKKRQFEMK) the composition is skewed to basic and acidic residues. Residues 149 to 152 (HYNE) are required for binding PPP1CC catalytic center, displacing metal ions and inhibition of PPP1CC catalytic activity. Positions 165–207 (KDLNDEEEDEEMSETAAGESMNMEESSQGSATSDQLQNKSQSS) are disordered. Over residues 168–177 (NDEEEDEEMS) the composition is skewed to acidic residues. Residues 187 to 207 (MEESSQGSATSDQLQNKSQSS) show a composition bias toward polar residues.

The protein belongs to the protein phosphatase inhibitor 2 family. Heterodimer with PP1. In terms of processing, phosphorylation on Ser-44 by ATM activates PP1 by dissociating the PP1-PPP1R2 complex. Phosphorylation on Thr-73 by GSK3 activates PP1 by dissociating the PP1-PPP1R2 complex.

Inhibitor of protein-phosphatase 1. This chain is Protein phosphatase inhibitor 2 (PPP1R2), found in Bos taurus (Bovine).